Consider the following 127-residue polypeptide: KP4 killer toxin (127 aa).

A signal peptide spans 1–22 (MQIINVVYSFLFAAAMLPVVHS). Cystine bridges form between C27–C100, C33–C103, C49–C89, C57–C82, and C66–C127.

Monomer.

It localises to the secreted. This protein is lethal to sensitive cells of the same or related species. It specifically inhibits voltage-gated calcium channels. It inhibits cell growth and division by blocking calcium import. The polypeptide is KP4 killer toxin (M2A) (Mycosarcoma maydis (Corn smut fungus)).